A 141-amino-acid chain; its full sequence is HTH-type transcriptional repressor NsrR (141 aa).

Positions 2–129 (QLTSFTDYGL…DNYTLADLVE (128 aa)) constitute an HTH rrf2-type domain. A DNA-binding region (H-T-H motif) is located at residues 28–51 (ISEVTDVYGVSRNHMVKIINQLSR). Positions 91, 96, and 102 each coordinate [2Fe-2S] cluster.

[2Fe-2S] cluster is required as a cofactor.

Functionally, nitric oxide-sensitive repressor of genes involved in protecting the cell against nitrosative stress. May require iron for activity. In Escherichia coli O139:H28 (strain E24377A / ETEC), this protein is HTH-type transcriptional repressor NsrR.